Consider the following 444-residue polypeptide: Phosphoglucosamine mutase (444 aa).

Ser-102 serves as the catalytic Phosphoserine intermediate. Residues Ser-102, Asp-241, Asp-243, and Asp-245 each contribute to the Mg(2+) site. Ser-102 carries the post-translational modification Phosphoserine.

It belongs to the phosphohexose mutase family. Mg(2+) serves as cofactor. Activated by phosphorylation.

It carries out the reaction alpha-D-glucosamine 1-phosphate = D-glucosamine 6-phosphate. Functionally, catalyzes the conversion of glucosamine-6-phosphate to glucosamine-1-phosphate. This Haemophilus ducreyi (strain 35000HP / ATCC 700724) protein is Phosphoglucosamine mutase.